The following is a 255-amino-acid chain: Geranylgeranylglyceryl phosphate synthase (255 aa).

Mg(2+)-binding residues include Asp-25 and Ser-54. Residues 173 to 179, 203 to 204, and 225 to 226 each bind sn-glycerol 1-phosphate; these read YLEGGSG, GG, and GT.

The protein belongs to the GGGP/HepGP synthase family. Group II subfamily. Requires Mg(2+) as cofactor.

The protein resides in the cytoplasm. It carries out the reaction sn-glycerol 1-phosphate + (2E,6E,10E)-geranylgeranyl diphosphate = sn-3-O-(geranylgeranyl)glycerol 1-phosphate + diphosphate. It participates in membrane lipid metabolism; glycerophospholipid metabolism. Its function is as follows. Prenyltransferase that catalyzes the transfer of the geranylgeranyl moiety of geranylgeranyl diphosphate (GGPP) to the C3 hydroxyl of sn-glycerol-1-phosphate (G1P). This reaction is the first ether-bond-formation step in the biosynthesis of archaeal membrane lipids. This chain is Geranylgeranylglyceryl phosphate synthase, found in Thermofilum pendens (strain DSM 2475 / Hrk 5).